The sequence spans 144 residues: MKTFMAKSHVIKKTWYIIDAKHKILGRLSTVISRYLIGKHKIEYAPHVDIGDYVIVLNAKEVSVSGHKRDDKIYYHHTGYIGGIKQLNFKRMINRYPEKVIEIAVKGMLPKGPLGRMMYCRLRVYSGNVHAHAAQEPQFIDIDC.

This sequence belongs to the universal ribosomal protein uL13 family. Part of the 50S ribosomal subunit.

In terms of biological role, this protein is one of the early assembly proteins of the 50S ribosomal subunit, although it is not seen to bind rRNA by itself. It is important during the early stages of 50S assembly. The chain is Large ribosomal subunit protein uL13 from Blochmanniella pennsylvanica (strain BPEN).